A 211-amino-acid polypeptide reads, in one-letter code: Proteasome subunit beta (211 aa).

A propeptide spans 1 to 9 (MDNDKYLKG) (removed in mature form; by autocatalysis). Residue Thr-10 is the Nucleophile of the active site.

The protein belongs to the peptidase T1B family. In terms of assembly, the 20S proteasome core is composed of 14 alpha and 14 beta subunits that assemble into four stacked heptameric rings, resulting in a barrel-shaped structure. The two inner rings, each composed of seven catalytic beta subunits, are sandwiched by two outer rings, each composed of seven alpha subunits. The catalytic chamber with the active sites is on the inside of the barrel. Has a gated structure, the ends of the cylinder being occluded by the N-termini of the alpha-subunits. Is capped at one or both ends by the proteasome regulatory ATPase, PAN.

The protein resides in the cytoplasm. The enzyme catalyses Cleavage of peptide bonds with very broad specificity.. With respect to regulation, the formation of the proteasomal ATPase PAN-20S proteasome complex, via the docking of the C-termini of PAN into the intersubunit pockets in the alpha-rings, triggers opening of the gate for substrate entry. Interconversion between the open-gate and close-gate conformations leads to a dynamic regulation of the 20S proteasome proteolysis activity. Functionally, component of the proteasome core, a large protease complex with broad specificity involved in protein degradation. The polypeptide is Proteasome subunit beta (Methanosarcina barkeri (strain Fusaro / DSM 804)).